Here is a 247-residue protein sequence, read N- to C-terminus: ATP synthase subunit a, chloroplastic (247 aa).

The next 5 membrane-spanning stretches (helical) occupy residues 38–58 (QVLITSWVVIAILLGSASIAV), 95–115 (VPFIGTMFLFIFVSNWSGALL), 134–154 (INTTVALALLTSVAYFYAGLT), 199–219 (LVVVVLVSLVPLVVPIPVMFL), and 220–240 (GLFTSGIQALIFATLAAAYIG).

Belongs to the ATPase A chain family. F-type ATPases have 2 components, CF(1) - the catalytic core - and CF(0) - the membrane proton channel. CF(1) has five subunits: alpha(3), beta(3), gamma(1), delta(1), epsilon(1). CF(0) has four main subunits: a, b, b' and c.

Its subcellular location is the plastid. It localises to the chloroplast thylakoid membrane. Key component of the proton channel; it plays a direct role in the translocation of protons across the membrane. The chain is ATP synthase subunit a, chloroplastic from Eucalyptus globulus subsp. globulus (Tasmanian blue gum).